We begin with the raw amino-acid sequence, 472 residues long: Replicative helicase loading/DNA remodeling protein DnaB (472 aa).

The tract at residues 1-112 (MADYWKDVLP…ERLFIYELLP (112 aa)) is DDBH1. The interval 210-302 (DLFLAGLSET…VHLREGEQPA (93 aa)) is DDBH2-1. Residues 303 to 411 (EEDSLDGKLI…RQYLEWAEGK (109 aa)) form a DDBH2-2 region. The tract at residues 415–472 (SKRNQKVIREEKLPDWMTEKETASDSESGQQKLHPQDLEEQKKKMMEEMQKLKKYSAY) is disordered. Basic and acidic residues-rich tracts occupy residues 421 to 437 (VIRE…KETA) and 448 to 465 (HPQD…EMQK).

The protein belongs to the DnaB/DnaD family. As to quaternary structure, homotetramer. Also forms higher-order oligomers, can be induced by some ssDNA. The DNA replisome assembles sequentially on oriC in this order; DnaA, DnaD, DnaB, DnaI-DnaC helicase. In atomic force microscopy forms a square with a small central hole. Part of the replication restart primosome which assembles in this order; PriA, DnaD then DnaB. The preferred DNA substrate mimics an arrested DNA replication fork with unreplicated lagging strand. Interacts with DnaC, but probably not as a tetramer. Interacts with DnaD but no interaction with PriA was seen. Interacts with cell cycle regulator CcrZ. In early growth phase only full-length protein is detected, during late growth and stationary phase full-length and C-terminally truncated proteins are seen (at protein level). Truncated protein is only seen in cytoplasmic fractions.

Its subcellular location is the cytoplasm. It is found in the cell membrane. Helps DnaI load the DnaC replicative helicase onto single-stranded (ss)DNA. During DNA replication from the origin of replication (oriC) in the DNA replisome, DnaD is required after DnaA, before DnaB and before subsequent helicase DnaC loading. Component of the replication restart primosome, which reloads the replicative helicase on sites other than oriC. DnaB, DnaD and DnaI may also be required for a PriA-independent pathway of replication fork restart. DnaB and DnaD work together to allow DnaB access to ssDNA. DNA replication at oriC might originate on the inner face of the cell membrane; DnaB is essential for both replication initiation and cell membrane attachment of the origin region of the chromosome and plasmids. Weakly binds ssDNA, preferentially binds double-stranded (ds)DNA, and replication fork-like substrates. Remodels DNA, laterally compacts supercoiled plasmid and linear DNA, forms beads along the dsDNA. Together DnaB and DnaD form bipolar complexes on plasmid DNA. DnaB and DnaD are also required to load helicase on the repN plasmid origin of replication (oriN). The polypeptide is Replicative helicase loading/DNA remodeling protein DnaB (Bacillus subtilis (strain 168)).